The chain runs to 418 residues: UDP-N-acetyl-D-mannosamine dehydrogenase (418 aa).

Residues Tyr10, Ile11, Asp30, Thr85, and Thr119 each coordinate NAD(+). 9 residues coordinate UDP-N-acetyl-alpha-D-mannosaminouronate: Arg152, Val153, Lys204, Asn208, Arg211, His242, Arg244, Thr249, and Gly255. The Proton donor/acceptor role is filled by Lys204. Residue Cys258 is the Nucleophile of the active site. Lys261 provides a ligand contact to NAD(+). Tyr318 and Lys319 together coordinate UDP-N-acetyl-alpha-D-mannosaminouronate. Arg326 lines the NAD(+) pocket. Arg398 is a UDP-N-acetyl-alpha-D-mannosaminouronate binding site.

This sequence belongs to the UDP-glucose/GDP-mannose dehydrogenase family. Homodimer.

The enzyme catalyses UDP-N-acetyl-alpha-D-mannosamine + 2 NAD(+) + H2O = UDP-N-acetyl-alpha-D-mannosaminouronate + 2 NADH + 3 H(+). Its function is as follows. Catalyzes the four-electron oxidation of UDP-N-acetyl-D-mannosamine (UDP-ManNAc), reducing NAD(+) and releasing UDP-N-acetylmannosaminuronic acid (UDP-ManNAcA). In Pyrococcus horikoshii (strain ATCC 700860 / DSM 12428 / JCM 9974 / NBRC 100139 / OT-3), this protein is UDP-N-acetyl-D-mannosamine dehydrogenase.